Here is a 169-residue protein sequence, read N- to C-terminus: Cell division inhibitor SulA (169 aa).

Residues 106–112 (ALRTGNY) are ftsZ binding. The interval 162 to 169 (KIHSNLYH) is lon protease binding.

The protein belongs to the SulA family. Interacts with FtsZ. Is rapidly cleaved and degraded by the Lon protease once DNA damage is repaired.

Component of the SOS system and an inhibitor of cell division. Accumulation of SulA causes rapid cessation of cell division and the appearance of long, non-septate filaments. In the presence of GTP, binds a polymerization-competent form of FtsZ in a 1:1 ratio, thus inhibiting FtsZ polymerization and therefore preventing it from participating in the assembly of the Z ring. This mechanism prevents the premature segregation of damaged DNA to daughter cells during cell division. The polypeptide is Cell division inhibitor SulA (Escherichia coli O45:K1 (strain S88 / ExPEC)).